The primary structure comprises 137 residues: Nucleoside diphosphate kinase (137 aa).

ATP contacts are provided by K11, F59, R87, T93, R104, and N114. H117 functions as the Pros-phosphohistidine intermediate in the catalytic mechanism.

The protein belongs to the NDK family. In terms of assembly, homotetramer. Mg(2+) is required as a cofactor.

Its subcellular location is the cytoplasm. The catalysed reaction is a 2'-deoxyribonucleoside 5'-diphosphate + ATP = a 2'-deoxyribonucleoside 5'-triphosphate + ADP. The enzyme catalyses a ribonucleoside 5'-diphosphate + ATP = a ribonucleoside 5'-triphosphate + ADP. Its function is as follows. Major role in the synthesis of nucleoside triphosphates other than ATP. The ATP gamma phosphate is transferred to the NDP beta phosphate via a ping-pong mechanism, using a phosphorylated active-site intermediate. The protein is Nucleoside diphosphate kinase of Parafrankia sp. (strain EAN1pec).